The chain runs to 231 residues: Membrane protein YknW (231 aa).

5 consecutive transmembrane segments (helical) span residues 38 to 58, 93 to 113, 128 to 148, 171 to 191, and 205 to 225; these read VWGP…LQSL, GAII…WLCV, LSLF…IVAF, LASV…LLAI, and WISA…SGLI.

Interacts with a complex composed of YknX, YknY and YknZ.

The protein resides in the cell membrane. Part of an unusual four-component transporter, which is required for protection against the killing factor SdpC (sporulation-delaying protein). Has a role in the assembly of the YknXYZ complex. In Bacillus subtilis (strain 168), this protein is Membrane protein YknW (yknW).